We begin with the raw amino-acid sequence, 130 residues long: MASITGSSVSFKCAPLQSSFNSKNYALKSSVTFWRRTPVMPRGLSVSCAAKPEMVTKVSDIVKSQLALAEDAKVTGETKFSEIGADSLDTVEIVMKLEEEFGVTVEEENAQTITTIQEAADMIEALQQNK.

The transit peptide at 1–48 (MASITGSSVSFKCAPLQSSFNSKNYALKSSVTFWRRTPVMPRGLSVSC) directs the protein to the chloroplast. The Carrier domain occupies 52-127 (PEMVTKVSDI…EAADMIEALQ (76 aa)). Residue Ser87 is modified to O-(pantetheine 4'-phosphoryl)serine.

The protein belongs to the acyl carrier protein (ACP) family. In terms of processing, 4'-phosphopantetheine is transferred from CoA to a specific serine of apo-ACP by acpS. This modification is essential for activity because fatty acids are bound in thioester linkage to the sulfhydryl of the prosthetic group. In terms of tissue distribution, roots, leaves and seeds.

The protein localises to the plastid. Its subcellular location is the chloroplast. It participates in lipid metabolism; fatty acid biosynthesis. In terms of biological role, carrier of the growing fatty acid chain in fatty acid biosynthesis. The protein is Acyl carrier protein 2, chloroplastic (ACL1.2) of Spinacia oleracea (Spinach).